We begin with the raw amino-acid sequence, 306 residues long: Solute carrier family 25 member 48 (306 aa).

Solcar repeat units lie at residues S3 to F86, R101 to W200, and P209 to A296. The next 6 helical transmembrane spans lie at F9 to V29, G61 to S81, L107 to I127, I184 to E204, Y212 to M232, and I272 to Y290.

The protein belongs to the mitochondrial carrier (TC 2.A.29) family.

The protein localises to the mitochondrion inner membrane. The chain is Solute carrier family 25 member 48 (Slc25a48) from Mus musculus (Mouse).